The chain runs to 476 residues: Zinc metalloproteinase/disintegrin (476 aa).

The signal sequence occupies residues 1 to 20; that stretch reads MIQVLLVTICLAAFPYQGSS. Residues 21-192 constitute a propeptide that is removed on maturation; it reads IILESGNVND…ASQSNLTPEQ (172 aa). Gln193 is modified (pyrrolidone carboxylic acid). In terms of domain architecture, Peptidase M12B spans 198–393; sequence RYIELAVVAD…HNPQCILNKP (196 aa). Positions 201 and 285 each coordinate Ca(2+). 3 disulfides stabilise this stretch: Cys309/Cys388, Cys348/Cys372, and Cys350/Cys355. His334 lines the Zn(2+) pocket. The active site involves Glu335. 2 residues coordinate Zn(2+): His338 and His344. Positions 388 and 391 each coordinate Ca(2+). The propeptide occupies 394–403; it reads LTTVSGNELL. Positions 395-476 constitute a Disintegrin domain; that stretch reads TTVSGNELLE…ADCPRNRFHA (82 aa). Cystine bridges form between Cys409/Cys424, Cys411/Cys419, Cys418/Cys441, Cys432/Cys438, Cys437/Cys462, and Cys450/Cys469. The short motif at 454 to 456 is the Cell attachment site element; sequence RGD.

This sequence belongs to the venom metalloproteinase (M12B) family. P-II subfamily. P-IIa sub-subfamily. In terms of assembly, monomer (metalloprotease). The cofactor is Zn(2+). Post-translationally, the N-terminus is blocked. In terms of processing, not glycosylated. Expressed by the venom gland.

The protein resides in the secreted. Inhibited by EDTA, and 1,10-phenanthroline, but not by PMSF. In terms of biological role, non-hemorrhagic proteinase that activates prothrombin (F2) calcium-independently. Activates factor X (F10) and hydrolyzes the Aalpha-chain and more slowly the Bbeta-chain of fibrin and fibrinogen without affecting the gamma chain. It induces neither detachment nor apoptosis of human endothelial cells and is also not able to trigger an endothelial pro-inflammatory cell response. Nitric oxide and prostacyclin levels released by endothelial cells are significantly increased after treatment with insularinase A. Inhibits ADP-induced platelet aggregation (IC(50)=0.8 uM for native protein). Interestingly, inhibits the adhesion of HUVECs to immobilized fibrinogen at very low concentrations (IC(50)=36 nM). This chain is Zinc metalloproteinase/disintegrin, found in Bothrops insularis (Golden lancehead).